Consider the following 365-residue polypeptide: Flagellar P-ring protein (365 aa).

A signal peptide spans 1 to 22 (MSVRRFLVWILALTVGAAPVMA).

Belongs to the FlgI family. The basal body constitutes a major portion of the flagellar organelle and consists of four rings (L,P,S, and M) mounted on a central rod.

It localises to the periplasm. It is found in the bacterial flagellum basal body. Assembles around the rod to form the L-ring and probably protects the motor/basal body from shearing forces during rotation. In Marinobacter nauticus (strain ATCC 700491 / DSM 11845 / VT8) (Marinobacter aquaeolei), this protein is Flagellar P-ring protein.